Consider the following 325-residue polypeptide: GMP reductase (325 aa).

C174 serves as the catalytic Thioimidate intermediate. 203–226 serves as a coordination point for NADP(+); that stretch reads IIADGGIRTHGDIAKSIRFGATMV.

This sequence belongs to the IMPDH/GMPR family. GuaC type 2 subfamily.

It carries out the reaction IMP + NH4(+) + NADP(+) = GMP + NADPH + 2 H(+). Functionally, catalyzes the irreversible NADPH-dependent deamination of GMP to IMP. It functions in the conversion of nucleobase, nucleoside and nucleotide derivatives of G to A nucleotides, and in maintaining the intracellular balance of A and G nucleotides. This chain is GMP reductase, found in Helicobacter pylori (strain J99 / ATCC 700824) (Campylobacter pylori J99).